The chain runs to 271 residues: Formamidopyrimidine-DNA glycosylase (271 aa).

The Schiff-base intermediate with DNA role is filled by Pro-2. Glu-3 functions as the Proton donor in the catalytic mechanism. The Proton donor; for beta-elimination activity role is filled by Lys-58. Residues His-92, Arg-111, and Arg-152 each coordinate DNA. An FPG-type zinc finger spans residues 237–271; sequence SVYGREGEACKQCGRVLKHATIGQRATVWCGSCQR. Arg-261 (proton donor; for delta-elimination activity) is an active-site residue.

It belongs to the FPG family. As to quaternary structure, monomer. Requires Zn(2+) as cofactor.

It carries out the reaction Hydrolysis of DNA containing ring-opened 7-methylguanine residues, releasing 2,6-diamino-4-hydroxy-5-(N-methyl)formamidopyrimidine.. The catalysed reaction is 2'-deoxyribonucleotide-(2'-deoxyribose 5'-phosphate)-2'-deoxyribonucleotide-DNA = a 3'-end 2'-deoxyribonucleotide-(2,3-dehydro-2,3-deoxyribose 5'-phosphate)-DNA + a 5'-end 5'-phospho-2'-deoxyribonucleoside-DNA + H(+). In terms of biological role, involved in base excision repair of DNA damaged by oxidation or by mutagenic agents. Acts as a DNA glycosylase that recognizes and removes damaged bases. Has a preference for oxidized purines, such as 7,8-dihydro-8-oxoguanine (8-oxoG). Has AP (apurinic/apyrimidinic) lyase activity and introduces nicks in the DNA strand. Cleaves the DNA backbone by beta-delta elimination to generate a single-strand break at the site of the removed base with both 3'- and 5'-phosphates. This is Formamidopyrimidine-DNA glycosylase from Xanthomonas euvesicatoria pv. vesicatoria (strain 85-10) (Xanthomonas campestris pv. vesicatoria).